Here is a 206-residue protein sequence, read N- to C-terminus: Orotate phosphoribosyltransferase (206 aa).

Residues arginine 97, lysine 98, lysine 101, and 125–133 each bind 5-phospho-alpha-D-ribose 1-diphosphate; that span reads NDVIASGRS. Arginine 157 is an orotate binding site.

The protein belongs to the purine/pyrimidine phosphoribosyltransferase family. PyrE subfamily. Homodimer. The cofactor is Mg(2+).

The enzyme catalyses orotidine 5'-phosphate + diphosphate = orotate + 5-phospho-alpha-D-ribose 1-diphosphate. It participates in pyrimidine metabolism; UMP biosynthesis via de novo pathway; UMP from orotate: step 1/2. Its function is as follows. Catalyzes the transfer of a ribosyl phosphate group from 5-phosphoribose 1-diphosphate to orotate, leading to the formation of orotidine monophosphate (OMP). The polypeptide is Orotate phosphoribosyltransferase (Chlamydia felis (strain Fe/C-56) (Chlamydophila felis)).